The following is a 197-amino-acid chain: UPF0215 protein MK0057 (197 aa).

It belongs to the UPF0215 family.

The sequence is that of UPF0215 protein MK0057 from Methanopyrus kandleri (strain AV19 / DSM 6324 / JCM 9639 / NBRC 100938).